The sequence spans 654 residues: Bifunctional polymyxin resistance protein ArnA (654 aa).

The tract at residues 1-303 (MKVIVFAYHE…NISRIKGKKL (303 aa)) is formyltransferase ArnAFT. Histidine 105 serves as the catalytic Proton donor; for formyltransferase activity. 137-141 (TKKID) is a (6R)-10-formyltetrahydrofolate binding site. Residues 313–654 (NLKKILILGV…INFFINNNTS (342 aa)) are dehydrogenase ArnADH. Residues aspartate 346 and 367-368 (DI) each bind NAD(+). UDP-alpha-D-glucuronate contacts are provided by residues alanine 392, tyrosine 397, and 431–432 (TS). Glutamate 433 (proton acceptor; for decarboxylase activity) is an active-site residue. Residues arginine 459, asparagine 491, 532–534 (QKR), and tyrosine 612 contribute to the UDP-alpha-D-glucuronate site. Arginine 618 (proton donor; for decarboxylase activity) is an active-site residue.

In the N-terminal section; belongs to the Fmt family. UDP-L-Ara4N formyltransferase subfamily. The protein in the C-terminal section; belongs to the NAD(P)-dependent epimerase/dehydratase family. UDP-glucuronic acid decarboxylase subfamily. As to quaternary structure, homohexamer, formed by a dimer of trimers.

It carries out the reaction UDP-alpha-D-glucuronate + NAD(+) = UDP-beta-L-threo-pentopyranos-4-ulose + CO2 + NADH. It catalyses the reaction UDP-4-amino-4-deoxy-beta-L-arabinose + (6R)-10-formyltetrahydrofolate = UDP-4-deoxy-4-formamido-beta-L-arabinose + (6S)-5,6,7,8-tetrahydrofolate + H(+). Its pathway is nucleotide-sugar biosynthesis; UDP-4-deoxy-4-formamido-beta-L-arabinose biosynthesis; UDP-4-deoxy-4-formamido-beta-L-arabinose from UDP-alpha-D-glucuronate: step 1/3. It functions in the pathway nucleotide-sugar biosynthesis; UDP-4-deoxy-4-formamido-beta-L-arabinose biosynthesis; UDP-4-deoxy-4-formamido-beta-L-arabinose from UDP-alpha-D-glucuronate: step 3/3. The protein operates within bacterial outer membrane biogenesis; lipopolysaccharide biosynthesis. Bifunctional enzyme that catalyzes the oxidative decarboxylation of UDP-glucuronic acid (UDP-GlcUA) to UDP-4-keto-arabinose (UDP-Ara4O) and the addition of a formyl group to UDP-4-amino-4-deoxy-L-arabinose (UDP-L-Ara4N) to form UDP-L-4-formamido-arabinose (UDP-L-Ara4FN). The modified arabinose is attached to lipid A and is required for resistance to polymyxin and cationic antimicrobial peptides. This chain is Bifunctional polymyxin resistance protein ArnA, found in Wigglesworthia glossinidia brevipalpis.